We begin with the raw amino-acid sequence, 1501 residues long: Neither inactivation nor afterpotential protein C (1501 aa).

A Protein kinase domain is found at 16–282 (FEIYEEIAQG…MVEMVEHPFL (267 aa)). ATP is bound by residues 22–30 (IAQGVNAKV) and lysine 45. Residue aspartate 145 is the Proton acceptor of the active site. Residue serine 183 is modified to Phosphoserine. One can recognise a Myosin motor domain in the interval 332–1037 (MYPEDLAALE…FLARLYELQV (706 aa)). The tract at residues 913–934 (LTLLKMLSQNANLGVHFVRCIR) is actin-binding. IQ domains lie at 1036-1065 (QVKKVIKVQSMMRALLARKRVKGGKVFKLG) and 1072-1101 (HDVAASKIQKAFRGFRDRVRLPPLVNEKSG). The segment at 1043 to 1271 (VQSMMRALLA…RMGESDNIYN (229 aa)) is interaction with rtp. Residues 1066 to 1501 (KKGPEHHDVA…ITLSGYAVDI (436 aa)) are non alpha-helical, C-terminal domain. 2 disordered regions span residues 1308–1364 (NWGV…DPVR) and 1390–1473 (KTNY…EDSN). The span at 1326 to 1335 (APPPPPPPMP) shows a compositional bias: pro residues. Positions 1336-1358 (SSNYYRNNPNQQQRNYQQRSSYP) are enriched in low complexity. Over residues 1405–1414 (NNRRGSDSGD) the composition is skewed to basic and acidic residues. Polar residues predominate over residues 1449–1463 (FGQQQRAPTLRQSPA).

It in the C-terminal section; belongs to the TRAFAC class myosin-kinesin ATPase superfamily. Myosin family. The protein in the N-terminal section; belongs to the protein kinase superfamily. Ser/Thr protein kinase family. As to quaternary structure, interacts with rtp. As to expression, expressed in the phototransducing compartment of photoreceptor cells, the rhabdomeres (at protein level).

The protein resides in the cytoplasm. It localises to the cytoskeleton. Its subcellular location is the nucleus. It is found in the membrane. The protein localises to the cell projection. The protein resides in the rhabdomere membrane. It catalyses the reaction L-seryl-[protein] + ATP = O-phospho-L-seryl-[protein] + ADP + H(+). The catalysed reaction is L-threonyl-[protein] + ATP = O-phospho-L-threonyl-[protein] + ADP + H(+). Functionally, required for photoreceptor cell function. The ninaC proteins combines putative serine/threonine-protein kinase and myosin activities. Essential for the expression and stability of the rtp protein in the photoreceptors. The rtp/ninaC complex is required for stability of inad and inac and the normal termination of phototransduction in the retina. In Drosophila melanogaster (Fruit fly), this protein is Neither inactivation nor afterpotential protein C (ninaC).